A 105-amino-acid chain; its full sequence is Nucleoid-associated protein Sca_0120 (105 aa).

Positions 1–36 (MRGGGNMQQMMKQMQKMQKKMAEEQEKLKDEKVEGS) are disordered. Positions 7-16 (MQQMMKQMQK) are enriched in low complexity. The span at 20-34 (KMAEEQEKLKDEKVE) shows a compositional bias: basic and acidic residues.

It belongs to the YbaB/EbfC family. Homodimer.

It is found in the cytoplasm. The protein resides in the nucleoid. Binds to DNA and alters its conformation. May be involved in regulation of gene expression, nucleoid organization and DNA protection. In Staphylococcus carnosus (strain TM300), this protein is Nucleoid-associated protein Sca_0120.